We begin with the raw amino-acid sequence, 124 residues long: Small ribosomal subunit protein bS6 (124 aa).

The disordered stretch occupies residues 96 to 124 (ETGPSPMMKEVQREEAKKAAAAQPAEAQA). Over residues 114-124 (AAAAQPAEAQA) the composition is skewed to low complexity.

This sequence belongs to the bacterial ribosomal protein bS6 family.

In terms of biological role, binds together with bS18 to 16S ribosomal RNA. The chain is Small ribosomal subunit protein bS6 from Burkholderia orbicola (strain MC0-3).